Consider the following 173-residue polypeptide: Putative phosphoesterase GWCH70_0799 (173 aa).

The Proton donor role is filled by H34. Short sequence motifs (HXTX) lie at residues H34 to L37 and H115 to I118. H115 serves as the catalytic Proton acceptor.

It belongs to the 2H phosphoesterase superfamily. YjcG family.

The protein is Putative phosphoesterase GWCH70_0799 of Geobacillus sp. (strain WCH70).